We begin with the raw amino-acid sequence, 558 residues long: Formate--tetrahydrofolate ligase (558 aa).

67-74 (TPAGEGKT) contributes to the ATP binding site.

This sequence belongs to the formate--tetrahydrofolate ligase family.

It carries out the reaction (6S)-5,6,7,8-tetrahydrofolate + formate + ATP = (6R)-10-formyltetrahydrofolate + ADP + phosphate. It participates in one-carbon metabolism; tetrahydrofolate interconversion. The sequence is that of Formate--tetrahydrofolate ligase from Sphingobium sp. (strain NBRC 103272 / SYK-6).